Here is a 122-residue protein sequence, read N- to C-terminus: Large ribosomal subunit protein uL14 (122 aa).

The protein belongs to the universal ribosomal protein uL14 family. Part of the 50S ribosomal subunit. Forms a cluster with proteins L3 and L19. In the 70S ribosome, L14 and L19 interact and together make contacts with the 16S rRNA in bridges B5 and B8.

Functionally, binds to 23S rRNA. Forms part of two intersubunit bridges in the 70S ribosome. The protein is Large ribosomal subunit protein uL14 of Clostridium botulinum (strain 657 / Type Ba4).